The following is a 104-amino-acid chain: Phosphoribosyl-ATP pyrophosphatase (104 aa).

This sequence belongs to the PRA-PH family.

The protein resides in the cytoplasm. It catalyses the reaction 1-(5-phospho-beta-D-ribosyl)-ATP + H2O = 1-(5-phospho-beta-D-ribosyl)-5'-AMP + diphosphate + H(+). It participates in amino-acid biosynthesis; L-histidine biosynthesis; L-histidine from 5-phospho-alpha-D-ribose 1-diphosphate: step 2/9. In Rhizobium rhizogenes (strain K84 / ATCC BAA-868) (Agrobacterium radiobacter), this protein is Phosphoribosyl-ATP pyrophosphatase.